The following is a 72-amino-acid chain: Small ribosomal subunit protein bS18c (72 aa).

Belongs to the bacterial ribosomal protein bS18 family. Part of the 30S ribosomal subunit.

It is found in the plastid. The protein resides in the chloroplast. This Thalassiosira pseudonana (Marine diatom) protein is Small ribosomal subunit protein bS18c.